Reading from the N-terminus, the 308-residue chain is Ribonuclease Z (308 aa).

The Zn(2+) site is built by His-62, His-64, Asp-66, His-67, His-140, Asp-211, and His-269. Catalysis depends on Asp-66, which acts as the Proton acceptor.

It belongs to the RNase Z family. In terms of assembly, homodimer. It depends on Zn(2+) as a cofactor.

It carries out the reaction Endonucleolytic cleavage of RNA, removing extra 3' nucleotides from tRNA precursor, generating 3' termini of tRNAs. A 3'-hydroxy group is left at the tRNA terminus and a 5'-phosphoryl group is left at the trailer molecule.. Its function is as follows. Zinc phosphodiesterase, which displays some tRNA 3'-processing endonuclease activity. Probably involved in tRNA maturation, by removing a 3'-trailer from precursor tRNA. The protein is Ribonuclease Z of Treponema denticola (strain ATCC 35405 / DSM 14222 / CIP 103919 / JCM 8153 / KCTC 15104).